Consider the following 688-residue polypeptide: SRSF protein kinase 2 (688 aa).

The segment at 1–65 is disordered; it reads MSVNSEKSSS…EQEDPADYCK (65 aa). Pro residues predominate over residues 22-43; it reads LVPPPPPPPPPPPPPLPDPTPP. Positions 44-61 are enriched in acidic residues; that stretch reads EPEEEILGSDDEEQEDPA. A Phosphoserine modification is found at serine 52. In terms of domain architecture, Protein kinase spans 81–684; it reads YHVIRKLGWG…ASAGECLRHP (604 aa). Residues 87–95 and lysine 110 each bind ATP; that span reads LGWGHFSTV. Aspartate 214 acts as the Proton acceptor in catalysis. 3 disordered regions span residues 239–277, 329–444, and 469–501; these read WQKAGAPPPSGSAVSTAPQQKPIGKISKNKKKKLKKKQK, GLEE…GRHK, and SVLSEGSPLTEQEESSPSHDRSRTVSASSTGDL. The span at 265–277 shows a compositional bias: basic residues; sequence SKNKKKKLKKKQK. Phosphoserine is present on serine 380. Residues 397–421 are compositionally biased toward acidic residues; that stretch reads QLDDEDDDEEDCPNPEEYNLDEPNA. Residues 423–433 show a composition bias toward polar residues; the sequence is SDYTYSSSYEQ. Serine 475 is modified (phosphoserine). Phosphothreonine is present on threonine 478. A phosphoserine mark is found at serine 484, serine 486, and serine 490. Threonine 492 bears the Phosphothreonine; by PKB/AKT1 mark. Serine 494 and serine 497 each carry phosphoserine. Phosphoserine; by CK2 is present on serine 588.

The protein belongs to the protein kinase superfamily. CMGC Ser/Thr protein kinase family. In terms of assembly, associates with U4/U6-U5 tri-small nuclear ribonucleoproteins (U4/U6-U5 tri-snRNPs). Interacts with PKB/AKT1 in a phosphorylation-dependent manner. The phosphorylated form (by PKB/AKT1) interacts with YWHAB and YWHAE. Interaction with YWHAB suppresses its cleavage by caspases and inhibits the release of its N-terminal pro-apoptotic fragment. Interacts with SFN. Interacts with ACIN1. Interacts with POLR2A/RNA polymerase II; the interaction occurs during the co-transcriptional formation of inappropriate R-loops. Mg(2+) serves as cofactor. Post-translationally, phosphorylation at Thr-492 by PKB/AKT1 enhances its stimulatory activity in triggering cyclin-D1 (CCND1) expression and promoting apoptosis in neurons, which can be blocked by YWHAB. It also enhances its protein kinase activity toward ACIN1 and SRSF2, promotes its nuclear translocation and prevents its proteolytic cleavage. In terms of processing, proteolytically cleaved at Asp-139 and Asp-403 by caspase-3 during apoptotic cell death. Cleavage at Asp-139 which is the major site of cleavage, produces a small N-terminal fragment that translocates into nucleus and promotes VP16-induced apoptosis. Highly expressed in brain, moderately expressed in heart and skeletal muscle and at low levels in lung, liver, and kidney.

It localises to the cytoplasm. The protein resides in the nucleus. Its subcellular location is the nucleoplasm. The protein localises to the nucleus speckle. It is found in the chromosome. The catalysed reaction is L-seryl-[protein] + ATP = O-phospho-L-seryl-[protein] + ADP + H(+). The enzyme catalyses L-threonyl-[protein] + ATP = O-phospho-L-threonyl-[protein] + ADP + H(+). Activated by phosphorylation on Ser-52 and Ser-588. Functionally, serine/arginine-rich protein-specific kinase which specifically phosphorylates its substrates at serine residues located in regions rich in arginine/serine dipeptides, known as RS domains and is involved in the phosphorylation of SR splicing factors and the regulation of splicing. Promotes neuronal apoptosis by up-regulating cyclin-D1 (CCND1) expression. This is done by the phosphorylation of SRSF2, leading to the suppression of p53/TP53 phosphorylation thereby relieving the repressive effect of p53/TP53 on cyclin-D1 (CCND1) expression. Phosphorylates ACIN1, and redistributes it from the nuclear speckles to the nucleoplasm, resulting in cyclin A1 but not cyclin A2 up-regulation. Plays an essential role in spliceosomal B complex formation via the phosphorylation of DDX23/PRP28. Probably by phosphorylating DDX23, leads to the suppression of incorrect R-loops formed during transcription; R-loops are composed of a DNA:RNA hybrid and the associated non-template single-stranded DNA. Can mediate hepatitis B virus (HBV) core protein phosphorylation. Plays a negative role in the regulation of HBV replication through a mechanism not involving the phosphorylation of the core protein but by reducing the packaging efficiency of the pregenomic RNA (pgRNA) without affecting the formation of the viral core particles. This Homo sapiens (Human) protein is SRSF protein kinase 2.